Consider the following 911-residue polypeptide: Valine--tRNA ligase (911 aa).

A 'HIGH' region motif is present at residues 57–67 (PTVSGSLHVGH). The 'KMSKS' region signature appears at 599-603 (KMSKS). K602 lines the ATP pocket. The segment at 882-911 (EESAAEDAPETEVAVEASELGEPPVKKPKH) is disordered.

The protein belongs to the class-I aminoacyl-tRNA synthetase family. ValS type 2 subfamily. Monomer.

It is found in the cytoplasm. The catalysed reaction is tRNA(Val) + L-valine + ATP = L-valyl-tRNA(Val) + AMP + diphosphate. Its function is as follows. Catalyzes the attachment of valine to tRNA(Val). As ValRS can inadvertently accommodate and process structurally similar amino acids such as threonine, to avoid such errors, it has a 'posttransfer' editing activity that hydrolyzes mischarged Thr-tRNA(Val) in a tRNA-dependent manner. This chain is Valine--tRNA ligase, found in Bifidobacterium longum subsp. infantis (strain ATCC 15697 / DSM 20088 / JCM 1222 / NCTC 11817 / S12).